The sequence spans 304 residues: Caspase-6 (304 aa).

The segment at 1-29 is disordered; that stretch reads MSGAERRPAAGRVQLDSKPTPTTTADGNQ. Residues 1-35 constitute a propeptide that is removed on maturation; the sequence is MSGAERRPAAGRVQLDSKPTPTTTADGNQNITEVD. Residues 17-29 show a composition bias toward polar residues; sequence SKPTPTTTADGNQ. Residues 54-56 are tri-arginine exosite; the sequence is QRR. The active site involves His-133. Residues 137–154 form a 130's region region; the sequence is DHVYAYDAQIKIETITNM. Cys-175 is an active-site residue. Positions 192-204 are excised as a propeptide; it reads SKDETTVNQTEVD.

The protein belongs to the peptidase C14A family. As to quaternary structure, heterotetramer that consists of two anti-parallel arranged heterodimers, each one formed by a 18 kDa (p18) and a 11 kDa (p11) subunit. Heterotetramer that consists of two anti-parallel arranged heterodimers, each one formed by a 18 kDa (Caspase-6 subunit p18) and a 11 kDa (Caspase-6 subunit p11) subunit. Widely expressed.

The protein resides in the cytoplasm. Its subcellular location is the nucleus. The catalysed reaction is Strict requirement for Asp at position P1 and has a preferred cleavage sequence of Val-Glu-His-Asp-|-.. With respect to regulation, during activation, the N-terminal prodomain is removed by cleavage. Concomitantly, double cleavage gives rise to a large 18-kDa and a small 11-kDa subunit. The two large and two small subunits then assemble to form the active CASP6 complex. Intramolecular cleavage at Asp-191 is a prerequisite for CASP6 self-activation. Cysteine protease that plays essential roles in programmed cell death, development and innate immunity. Acts as a non-canonical executioner caspase during apoptosis: localizes in the nucleus and cleaves the nuclear structural protein lamin-A/LMNA thereby inducing nuclear shrinkage and fragmentation. Lamin-A/LMNA cleavage is required for chromatin condensation and nuclear disassembly during apoptotic execution. Plays an essential role in defense against viruses by acting as a central mediator of the ZBP1-mediated pyroptosis, apoptosis, and necroptosis (PANoptosis), independently of its cysteine protease activity. PANoptosis is a unique inflammatory programmed cell death, which provides a molecular scaffold that allows the interactions and activation of machinery required for inflammasome/pyroptosis, apoptosis and necroptosis. This Gallus gallus (Chicken) protein is Caspase-6.